Consider the following 780-residue polypeptide: Protein phosphatase 1 regulatory subunit 21 (780 aa).

Coiled-coil stretches lie at residues 1-209 (MASA…NLHE) and 556-605 (ESRE…DRLR). The disordered stretch occupies residues 84–104 (EPRGKKNKKSGESSSQLSQEQ). The segment covering 95 to 104 (ESSSQLSQEQ) has biased composition (low complexity). Residue threonine 652 is modified to Phosphothreonine. The stretch at 694–742 (AECRALSKRLALAEKSKETLTEEMRLASQNISRLQDELMTTKRSYEDQL) forms a coiled coil.

In terms of assembly, component of the FERRY complex, composed of five subunits: TBCK, PPP1R21, FERRY3, CRYZL1 and GATAD1, with a ratio of 1:2:1:2:4 respectively. PPP1R21 serves as a binding hub connecting all five complex subunits to mediate the binding to specific mitochondrial mRNAs. Interacts with the GTP-bound form of RAB5A (via its C-terminal region); linking the mRNP complex onto trafficking endosomes for active mRNA transport. Interacts with PPP1CA. Expressed at 16 dpc in the cortex (at protein level).

It localises to the early endosome. Component of the FERRY complex (Five-subunit Endosomal Rab5 and RNA/ribosome intermediary). The FERRY complex directly interacts with mRNAs and RAB5A, and functions as a RAB5A effector involved in the localization and the distribution of specific mRNAs most likely by mediating their endosomal transport. The complex recruits mRNAs and ribosomes to early endosomes through direct mRNA-interaction. In the complex, PPP1R21 serves as a binding hub connecting all five complex subunits and mediating the binding to mRNA and early endosomes via RAB5A. Putative regulator of protein phosphatase 1 (PP1) activity. May play a role in the endosomal sorting process or in endosome maturation pathway. The protein is Protein phosphatase 1 regulatory subunit 21 (Ppp1r21) of Mus musculus (Mouse).